Consider the following 102-residue polypeptide: Small ribosomal subunit protein uS10 (102 aa).

Belongs to the universal ribosomal protein uS10 family. Part of the 30S ribosomal subunit.

Its function is as follows. Involved in the binding of tRNA to the ribosomes. This Myxococcus xanthus (strain DK1622) protein is Small ribosomal subunit protein uS10.